Consider the following 929-residue polypeptide: Isoleucine--tRNA ligase (929 aa).

The 'HIGH' region signature appears at 58–68; it reads PYANGDIHIGH. Residue glutamate 563 coordinates L-isoleucyl-5'-AMP. Residues 605–609 carry the 'KMSKS' region motif; that stretch reads KMSKS. Residue lysine 608 coordinates ATP. Positions 892, 895, 912, and 915 each coordinate Zn(2+).

This sequence belongs to the class-I aminoacyl-tRNA synthetase family. IleS type 1 subfamily. Monomer. Zn(2+) serves as cofactor.

The protein localises to the cytoplasm. It catalyses the reaction tRNA(Ile) + L-isoleucine + ATP = L-isoleucyl-tRNA(Ile) + AMP + diphosphate. Its function is as follows. Catalyzes the attachment of isoleucine to tRNA(Ile). As IleRS can inadvertently accommodate and process structurally similar amino acids such as valine, to avoid such errors it has two additional distinct tRNA(Ile)-dependent editing activities. One activity is designated as 'pretransfer' editing and involves the hydrolysis of activated Val-AMP. The other activity is designated 'posttransfer' editing and involves deacylation of mischarged Val-tRNA(Ile). The chain is Isoleucine--tRNA ligase from Neisseria meningitidis serogroup A / serotype 4A (strain DSM 15465 / Z2491).